The chain runs to 139 residues: uncharacterized protein (139 aa).

This is an uncharacterized protein from Ostreid herpesvirus 1 (isolate France) (OsHV-1).